A 371-amino-acid chain; its full sequence is tRNA (guanine(26)-N(2))-dimethyltransferase (371 aa).

In terms of domain architecture, Trm1 methyltransferase spans 1–370; the sequence is MDVSEGGVTV…GGLAEVEAAV (370 aa). The S-adenosyl-L-methionine site is built by Arg-36, Arg-66, Asp-81, Asp-107, and Ala-108. Residues Cys-238, Cys-241, Cys-258, and Cys-261 each contribute to the Zn(2+) site.

Belongs to the class I-like SAM-binding methyltransferase superfamily. Trm1 family.

It catalyses the reaction guanosine(26) in tRNA + 2 S-adenosyl-L-methionine = N(2)-dimethylguanosine(26) in tRNA + 2 S-adenosyl-L-homocysteine + 2 H(+). Its function is as follows. Dimethylates a single guanine residue at position 26 of a number of tRNAs using S-adenosyl-L-methionine as donor of the methyl groups. The chain is tRNA (guanine(26)-N(2))-dimethyltransferase from Halobacterium salinarum (strain ATCC 700922 / JCM 11081 / NRC-1) (Halobacterium halobium).